Reading from the N-terminus, the 282-residue chain is Kanosamine-6-phosphate phosphatase (282 aa).

Catalysis depends on aspartate 25, which acts as the Nucleophile. Mg(2+) contacts are provided by aspartate 25 and aspartate 27. A phosphate-binding site is contributed by lysine 209. Mg(2+)-binding residues include aspartate 232 and serine 233. Asparagine 235 contacts phosphate.

This sequence belongs to the HAD-like hydrolase superfamily. Cof family. Homotetramer. Mg(2+) is required as a cofactor.

It catalyses the reaction D-kanosamine 6-phosphate + H2O = kanosamine + phosphate. The protein operates within antibiotic biosynthesis; kanosamine biosynthesis. Functionally, involved in the biosynthesis of kanosamine (3-amino-3-deoxy-D-glucose), which is known to have antibiotic and antifungal properties, and to be a precursor of the antibiotic neotrehalosadiamine (3,3'-diamino-3,3'-dideoxy-alpha,beta-trehalose (NTD)). Catalyzes the dephosphorylation of kanosamine 6-phosphate to yield kanosamine. There is a trace amount of activity using glucosamine-6-phosphate. The chain is Kanosamine-6-phosphate phosphatase (ntdB) from Bacillus subtilis (strain 168).